The following is a 186-amino-acid chain: NADH-quinone oxidoreductase subunit I (186 aa).

4Fe-4S ferredoxin-type domains are found at residues L70–A100 and D113–D142. [4Fe-4S] cluster-binding residues include C80, C83, C86, C90, C122, C125, C128, and C132.

Belongs to the complex I 23 kDa subunit family. NDH-1 is composed of 14 different subunits. Subunits NuoA, H, J, K, L, M, N constitute the membrane sector of the complex. It depends on [4Fe-4S] cluster as a cofactor.

It localises to the cell inner membrane. The catalysed reaction is a quinone + NADH + 5 H(+)(in) = a quinol + NAD(+) + 4 H(+)(out). Functionally, NDH-1 shuttles electrons from NADH, via FMN and iron-sulfur (Fe-S) centers, to quinones in the respiratory chain. The immediate electron acceptor for the enzyme in this species is believed to be ubiquinone. Couples the redox reaction to proton translocation (for every two electrons transferred, four hydrogen ions are translocated across the cytoplasmic membrane), and thus conserves the redox energy in a proton gradient. This is NADH-quinone oxidoreductase subunit I from Pelobacter propionicus (strain DSM 2379 / NBRC 103807 / OttBd1).